The primary structure comprises 425 residues: Metalloprotease AF_0655 (425 aa).

This sequence belongs to the peptidase U62 family.

Its function is as follows. Probable metalloprotease. In Archaeoglobus fulgidus (strain ATCC 49558 / DSM 4304 / JCM 9628 / NBRC 100126 / VC-16), this protein is Metalloprotease AF_0655.